Here is a 23-residue protein sequence, read N- to C-terminus: Melittin-related peptide AK-23-1 (23 aa).

A Lysine amide modification is found at Lys-23.

In terms of tissue distribution, expressed by the skin glands.

The protein localises to the secreted. The protein is Melittin-related peptide AK-23-1 of Rana arvalis (Moor frog).